The primary structure comprises 256 residues: Protein LIKE COV 1 (256 aa).

Positions 1–10 (MANRERDREL) are enriched in basic and acidic residues. Residues 1–39 (MANRERDRELLIPVADFGDKDDGSSSKPSSSSSASSSHQ) form a disordered region. At 1–60 (MANRERDRELLIPVADFGDKDDGSSSKPSSSSSASSSHQSGHETLSLFIRGWASKKFMTG) the chain is on the cytoplasmic side. The span at 25 to 39 (SSKPSSSSSASSSHQ) shows a compositional bias: low complexity. Residues 61–81 (CVILLPIAVTFYTTWWFIHFV) traverse the membrane as a helical segment. The Extracellular segment spans residues 82–93 (DGFFSPIYALLG). The helical transmembrane segment at 94–114 (INIFGFGFLTSIAFIFLVGVF) threads the bilayer. Residues 115 to 256 (MSSWLGASVL…KPLASIGNES (142 aa)) are Cytoplasmic-facing.

The protein belongs to the plant COV1 protein family. As to expression, expressed at low levels in flowers, stems, roots and leaves.

The protein resides in the membrane. The sequence is that of Protein LIKE COV 1 from Arabidopsis thaliana (Mouse-ear cress).